A 263-amino-acid chain; its full sequence is Mediator of RNA polymerase II transcription subunit 7 (263 aa).

Over residues 1 to 10 (MADAAQQRTL) the composition is skewed to polar residues. Disordered regions lie at residues 1 to 57 (MADA…PAEL), 101 to 122 (ITQL…SEPS), and 222 to 247 (GIAA…QKTI). Basic and acidic residues predominate over residues 24 to 47 (FTPDNLKRLEEIKKEASKGEDGKP). The segment covering 101–111 (ITQLYPSSSPA) has biased composition (polar residues). Over residues 234 to 247 (EDGRKESETSQKTI) the composition is skewed to basic and acidic residues.

This sequence belongs to the Mediator complex subunit 7 family. As to quaternary structure, component of the Mediator complex.

It is found in the nucleus. Its function is as follows. Component of the Mediator complex, a coactivator involved in the regulated transcription of nearly all RNA polymerase II-dependent genes. Mediator functions as a bridge to convey information from gene-specific regulatory proteins to the basal RNA polymerase II transcription machinery. Mediator is recruited to promoters by direct interactions with regulatory proteins and serves as a scaffold for the assembly of a functional preinitiation complex with RNA polymerase II and the general transcription factors. The protein is Mediator of RNA polymerase II transcription subunit 7 (med7) of Aspergillus niger (strain ATCC MYA-4892 / CBS 513.88 / FGSC A1513).